The chain runs to 229 residues: MSSSNRELVIDFVSYKLSQRGHCWSELEEEDENRTDTAAEAEMDSVLNGSPSWHPPAGHVVNGATVHRSSLEVHEIVRASDVRQALRDAGDEFELRYRRAFSDLTSQLHITPGTAYQSFEQVVNELFHDGVNWGRIVAFFSFGGALCVESVDKEMRVLVGRIVSWMTTYLTDHLDPWIQENGGWERFVDLYGNNAAAELRKGQETFNKWLLTGATVAGVLLLGSLLSRK.

Positions 4–24 match the BH4 motif; sequence SNRELVIDFVSYKLSQRGHCW. Positions 82–96 match the BH3 motif; it reads VRQALRDAGDEFELR. A BH1 motif is present at residues 125–144; it reads ELFHDGVNWGRIVAFFSFGG. A BH2 motif is present at residues 176–191; sequence PWIQENGGWERFVDLY. Residues 206–223 form a helical membrane-spanning segment; sequence FNKWLLTGATVAGVLLLG.

It belongs to the Bcl-2 family. Highest expression in organs with lymphoid development.

It is found in the mitochondrion membrane. Its subcellular location is the nucleus membrane. It localises to the mitochondrion matrix. The protein localises to the cytoplasm. The protein resides in the cytoskeleton. It is found in the microtubule organizing center. Its subcellular location is the centrosome. It localises to the cytosol. The protein localises to the cytoplasmic vesicle. The protein resides in the secretory vesicle. It is found in the synaptic vesicle membrane. Dominant regulator of apoptotic cell death. The long form displays cell death repressor activity, whereas the short isoform promotes apoptosis. Also acts as a regulator of G2 checkpoint and progression to cytokinesis during mitosis. This chain is Bcl-2-like protein 1 (BCL2L1), found in Gallus gallus (Chicken).